The chain runs to 317 residues: RHOMBOID-like protein 2 (317 aa).

Helical transmembrane passes span 33–53 (SWLI…VMFV), 118–138 (WLHA…FIGI), 149–169 (VGLI…LFLQ), 172–192 (ISVG…SELL), 202–222 (AAAL…GMLP), 224–244 (VDNF…FVLL), and 272–292 (LFVV…VMLF). Residue Ser-177 is the Nucleophile of the active site. His-229 acts as the Charge relay system in catalysis.

It belongs to the peptidase S54 family. In terms of tissue distribution, expressed in roots, seedlings, leaves, stems and flowers.

It is found in the golgi apparatus membrane. It carries out the reaction Cleaves type-1 transmembrane domains using a catalytic dyad composed of serine and histidine that are contributed by different transmembrane domains.. Its function is as follows. Rhomboid-type serine protease that catalyzes intramembrane proteolysis. Can cleave the Drosophila proteins Spitz and Keren. May function in pollen elongation. This is RHOMBOID-like protein 2 from Arabidopsis thaliana (Mouse-ear cress).